We begin with the raw amino-acid sequence, 450 residues long: tRNA modification GTPase MnmE (450 aa).

The (6S)-5-formyl-5,6,7,8-tetrahydrofolate site is built by arginine 20, glutamate 78, and lysine 117. A TrmE-type G domain is found at 211–372 (GLRMVIVGKP…LEESIYRETQ (162 aa)). Position 221 (asparagine 221) interacts with K(+). GTP is bound by residues 221-226 (NVGKST), 240-246 (TDIPGTT), 265-268 (DTAG), 326-329 (NKVD), and 353-355 (SAL). Serine 225 is a binding site for Mg(2+). K(+)-binding residues include threonine 240, isoleucine 242, and threonine 245. A Mg(2+)-binding site is contributed by threonine 246. A (6S)-5-formyl-5,6,7,8-tetrahydrofolate-binding site is contributed by lysine 450.

This sequence belongs to the TRAFAC class TrmE-Era-EngA-EngB-Septin-like GTPase superfamily. TrmE GTPase family. In terms of assembly, homodimer. Heterotetramer of two MnmE and two MnmG subunits. K(+) serves as cofactor.

Its subcellular location is the cytoplasm. Exhibits a very high intrinsic GTPase hydrolysis rate. Involved in the addition of a carboxymethylaminomethyl (cmnm) group at the wobble position (U34) of certain tRNAs, forming tRNA-cmnm(5)s(2)U34. The polypeptide is tRNA modification GTPase MnmE (Thermotoga maritima (strain ATCC 43589 / DSM 3109 / JCM 10099 / NBRC 100826 / MSB8)).